A 197-amino-acid chain; its full sequence is MKLLEDRINTDGQVLGQDILKVDRFLTHQVDYQLMKEIGKRFAQVYADAGVTKVVTIEASGIAPALYAAESLNVPMIFAKKAKNVTMNDDLLITEVYSFTKKLTSTVQISSKLIEEGDKVLIIDDFLANGQAALGLVHLMEQAKAEVVGLGMVIEKSFQDGRQKLLDQGMKLTSLARIEKFEDGKVIFAPADDIAFD.

Xanthine is bound by residues leucine 20 and threonine 27. 128-132 (ANGQA) serves as a coordination point for 5-phospho-alpha-D-ribose 1-diphosphate. Lysine 156 provides a ligand contact to xanthine.

This sequence belongs to the purine/pyrimidine phosphoribosyltransferase family. Xpt subfamily. In terms of assembly, homodimer.

The protein localises to the cytoplasm. It catalyses the reaction XMP + diphosphate = xanthine + 5-phospho-alpha-D-ribose 1-diphosphate. Its pathway is purine metabolism; XMP biosynthesis via salvage pathway; XMP from xanthine: step 1/1. Functionally, converts the preformed base xanthine, a product of nucleic acid breakdown, to xanthosine 5'-monophosphate (XMP), so it can be reused for RNA or DNA synthesis. In Lactococcus lactis subsp. cremoris (strain MG1363), this protein is Xanthine phosphoribosyltransferase.